A 146-amino-acid polypeptide reads, in one-letter code: Large ribosomal subunit protein uL16 (146 aa).

This sequence belongs to the universal ribosomal protein uL16 family. As to quaternary structure, part of the 50S ribosomal subunit.

Binds 23S rRNA and is also seen to make contacts with the A and possibly P site tRNAs. This chain is Large ribosomal subunit protein uL16, found in Caulobacter sp. (strain K31).